A 608-amino-acid chain; its full sequence is UvrABC system protein C (608 aa).

The GIY-YIG domain occupies 15–93; it reads HQPGVYRMYN…IKQYLPKYNV (79 aa). The UVR domain maps to 203–238; it reads RQVIQSLVEQMEGASQALNFEKAATIRDQIQSMRRV.

It belongs to the UvrC family. As to quaternary structure, interacts with UvrB in an incision complex.

It is found in the cytoplasm. In terms of biological role, the UvrABC repair system catalyzes the recognition and processing of DNA lesions. UvrC both incises the 5' and 3' sides of the lesion. The N-terminal half is responsible for the 3' incision and the C-terminal half is responsible for the 5' incision. The chain is UvrABC system protein C from Aliivibrio salmonicida (strain LFI1238) (Vibrio salmonicida (strain LFI1238)).